Consider the following 974-residue polypeptide: MSDQKFISIRGAREHNLKNVDLDLPRDKLIVMTGLSGSGKSSLAFDTIYAEGQRRYVESLSAYARQFLEMMQKPDVDQIDGLSPAISIEQKTTSRNPRSTVGTVTEIYDYMRLLFARVGIPYSPATGLPIESQTVSQMVDRVIALEEGTRLYILAPIVRGRKGEYRKELAELQKKGFQRVKVDGTFYEIADVPPLDKKYKHDIDVVVDRVVVRPDLSTRLADSLETCLKLADGLAIAEFADKPLPVGETAEGGSANKSANETHERILFSEKFACPVSGFTIPEIEPRLFSFNNPFGACPTCDGLGTQQAIDPNLIIPDESAALKDGAVAPWARSSSPYYNQTLEALGKAYGFKVSARWSELSEEARQAILYGTKGREITFHYDDGLRSYQTTKPFEGVIPNLERRWKETDSAWSREEIERFMASTPCPACNGYRLKPEALSVKIGKKHIGEITEMSIRKADAWFRDIDGSFNEKQREIAARILKEIRERLQFLNDVGLDYLTLARNSGTLSGGESQRIRLASQIGSGLTGVLYVLDEPSIGLHQRDNARLLDTLRHLRDLGNTVIVVEHDEDAILTADYVVDIGPAAGVHGGKVIAQGSPQDIMANTNSLTGKYLSGAMEVAVPAERRKISKTKRLRVVGARGNNLKNVSADIPLGTFTAVTGVSGGGKSTFLIETLFKAASRRIMGSREHPAEHDRIEGLEFLDKVIDIDQSPIGRTPRSNPATYTGAFTPIRDWFAGLPEAKARGYQPGRFSFNIKGGRCEACQGDGVIKIEMHFLPDVYVTCDVCHGKRYNRETLDVLFKGKSIADVLDMTVEEGAEFFSAVPAVRDKLETLVKVGLGYIKVGQQATTLSGGEAQRVKLAKELSRRATGRTLYILDEPTTGLHFHDVAKLLEVLHELVEQGNTVVVIEHNLEVIKTADWVIDLGPEGGDGGGEIVAVGRPEDIVQEKRSYTGQFLKELLERRPKRSSQAAE.

34–41 (GLSGSGKS) contacts ATP. ABC transporter domains lie at 331 to 610 (WARS…TNSL) and 630 to 959 (ISKT…QFLK). 663-670 (GVSGGGKS) serves as a coordination point for ATP. The segment at 762-788 (CEACQGDGVIKIEMHFLPDVYVTCDVC) adopts a C4-type zinc-finger fold.

It belongs to the ABC transporter superfamily. UvrA family. Forms a heterotetramer with UvrB during the search for lesions.

The protein resides in the cytoplasm. The UvrABC repair system catalyzes the recognition and processing of DNA lesions. UvrA is an ATPase and a DNA-binding protein. A damage recognition complex composed of 2 UvrA and 2 UvrB subunits scans DNA for abnormalities. When the presence of a lesion has been verified by UvrB, the UvrA molecules dissociate. The protein is UvrABC system protein A of Brucella melitensis biotype 1 (strain ATCC 23456 / CCUG 17765 / NCTC 10094 / 16M).